The chain runs to 483 residues: Glycogen synthase (483 aa).

Lys-18 provides a ligand contact to ADP-alpha-D-glucose.

This sequence belongs to the glycosyltransferase 1 family. Bacterial/plant glycogen synthase subfamily.

The enzyme catalyses [(1-&gt;4)-alpha-D-glucosyl](n) + ADP-alpha-D-glucose = [(1-&gt;4)-alpha-D-glucosyl](n+1) + ADP + H(+). The protein operates within glycan biosynthesis; glycogen biosynthesis. Its function is as follows. Synthesizes alpha-1,4-glucan chains using ADP-glucose. This Rhodopseudomonas palustris (strain TIE-1) protein is Glycogen synthase.